A 338-amino-acid chain; its full sequence is Ketol-acid reductoisomerase (NADP(+)) (338 aa).

The KARI N-terminal Rossmann domain maps to 1–181 (MKVYYDKDAD…GGTKGGVIET (181 aa)). NADP(+) contacts are provided by residues 24–27 (YGSQ), arginine 47, serine 52, and 82–85 (DETQ). The active site involves histidine 107. NADP(+) is bound at residue glycine 133. One can recognise a KARI C-terminal knotted domain in the interval 182–327 (SFREETETDL…AELRAMMPWI (146 aa)). Positions 190, 194, 226, and 230 each coordinate Mg(2+). Serine 251 contacts substrate.

Belongs to the ketol-acid reductoisomerase family. Mg(2+) serves as cofactor.

The catalysed reaction is (2R)-2,3-dihydroxy-3-methylbutanoate + NADP(+) = (2S)-2-acetolactate + NADPH + H(+). It carries out the reaction (2R,3R)-2,3-dihydroxy-3-methylpentanoate + NADP(+) = (S)-2-ethyl-2-hydroxy-3-oxobutanoate + NADPH + H(+). The protein operates within amino-acid biosynthesis; L-isoleucine biosynthesis; L-isoleucine from 2-oxobutanoate: step 2/4. It functions in the pathway amino-acid biosynthesis; L-valine biosynthesis; L-valine from pyruvate: step 2/4. Involved in the biosynthesis of branched-chain amino acids (BCAA). Catalyzes an alkyl-migration followed by a ketol-acid reduction of (S)-2-acetolactate (S2AL) to yield (R)-2,3-dihydroxy-isovalerate. In the isomerase reaction, S2AL is rearranged via a Mg-dependent methyl migration to produce 3-hydroxy-3-methyl-2-ketobutyrate (HMKB). In the reductase reaction, this 2-ketoacid undergoes a metal-dependent reduction by NADPH to yield (R)-2,3-dihydroxy-isovalerate. In Laribacter hongkongensis (strain HLHK9), this protein is Ketol-acid reductoisomerase (NADP(+)).